Reading from the N-terminus, the 236-residue chain is CD81 antigen (236 aa).

The Cytoplasmic segment spans residues 1–12 (MGVEGCTKCIKY). The helical transmembrane segment at 13 to 33 (LLFVFNFVFWLAGGVILGVAL) threads the bilayer. Residues 34–63 (WLRHDPQTTTLLYLELGDKPAPSTFYVGIY) lie on the Extracellular side of the membrane. A helical membrane pass occupies residues 64–84 (ILIAVGAVMMFVGFLGCYGAI). At 85-89 (QESQC) the chain is on the cytoplasmic side. The chain crosses the membrane as a helical span at residues 90–112 (LLGTFFTCLVILFACEVAAGIWG). Residues 113 to 201 (FVNKDQIAKD…QKIDELFSGK (89 aa)) lie on the Extracellular side of the membrane. Intrachain disulfides connect cysteine 156/cysteine 190 and cysteine 157/cysteine 175. Residues 202–224 (LYLIGIAAIVVAVIMIFEMILSM) traverse the membrane as a helical segment. Residue glutamate 219 coordinates cholesterol. The Cytoplasmic segment spans residues 225–236 (VLCCGIRNSSVY).

Belongs to the tetraspanin (TM4SF) family. In terms of assembly, homodimer. Part of a complex composed of CD19, CR2/CD21, CD81 and IFITM1/CD225 in the membrane of mature B cells. Interacts (via the second extracellular domain) with CD19; this interaction is initiated early during biosynthesis in the ER and enables trafficking of only properly folded CD19. Part of a complex that includes MHC class II/HLA-DR molecules and IFITM1. Interacts with IFITM1. Interacts with IFITM2 and IFITM3. Part of integrin-tetraspanin complex composed of CD9, CD81, beta-1 and beta-2 integrins in the membrane of monocyte/macrophages. Interacts (via the second extracellular domain) with integrin ITGAV:ITGB3. Interacts with CD247/CD3 zeta, ICAM1 and CD9 at the immune synapse on T cell membrane. Part of a GPCR-tetraspanin complex consisting at least of ADGRG1, CD81, possibly CD9, and GNA11 in which CD81 enhances the association of ADGRG1 with GNA11. Part of a complex composed of CD9, CD81, PTGFRN and IGSF8. Interacts directly with IGSF8. Interacts with CD53 and SCIMP. Interacts with SAMHD1 (via its C-terminus). Interacts with glypican GPC3 and with the transcriptional repressor HHEX; binding to GPC3 decreases the availability of free CD81 for binding to HHEX, resulting in nuclear translocation of HHEX and transcriptional repression. Interacts with CLDN1. Interacts with CLDN6 and CLDN9. Not glycosylated. Post-translationally, likely constitutively palmitoylated at low levels. Protein palmitoylation is up-regulated upon coligation of BCR and CD9-C2R-CD81 complexes in lipid rafts.

It localises to the cell membrane. The protein localises to the basolateral cell membrane. Structural component of specialized membrane microdomains known as tetraspanin-enriched microdomains (TERMs), which act as platforms for receptor clustering and signaling. Essential for trafficking and compartmentalization of CD19 receptor on the surface of activated B cells. Upon initial encounter with microbial pathogens, enables the assembly of CD19-CR2/CD21 and B cell receptor (BCR) complexes at signaling TERMs, lowering the threshold dose of antigen required to trigger B cell clonal expansion and antibody production. In T cells, facilitates the localization of CD247/CD3 zeta at antigen-induced synapses with B cells, providing for costimulation and polarization toward T helper type 2 phenotype. Present in MHC class II compartments, may also play a role in antigen presentation. Can act both as positive and negative regulator of homotypic or heterotypic cell-cell fusion processes. Positively regulates sperm-egg fusion and may be involved in acrosome reaction. In myoblasts, associates with CD9 and PTGFRN and inhibits myotube fusion during muscle regeneration. In macrophages, associates with CD9 and beta-1 and beta-2 integrins, and prevents macrophage fusion into multinucleated giant cells specialized in ingesting complement-opsonized large particles. Also prevents the fusion of mononuclear cell progenitors into osteoclasts in charge of bone resorption. May regulate the compartmentalization of enzymatic activities. In T cells, defines the subcellular localization of dNTPase SAMHD1 and permits its degradation by the proteasome, thereby controlling intracellular dNTP levels. Also involved in cell adhesion and motility. Positively regulates integrin-mediated adhesion of macrophages, particularly relevant for the inflammatory response in the lung. The polypeptide is CD81 antigen (Cd81) (Rattus norvegicus (Rat)).